A 186-amino-acid chain; its full sequence is dCTP deaminase, dUMP-forming (186 aa).

DCTP contacts are provided by residues 99 to 104 (KSSIAR), aspartate 117, 125 to 127 (TLE), glutamine 146, tyrosine 159, lysine 166, and glutamine 170. Glutamate 127 acts as the Proton donor/acceptor in catalysis.

This sequence belongs to the dCTP deaminase family. As to quaternary structure, homotrimer.

The enzyme catalyses dCTP + 2 H2O = dUMP + NH4(+) + diphosphate. It participates in pyrimidine metabolism; dUMP biosynthesis; dUMP from dCTP: step 1/1. In terms of biological role, bifunctional enzyme that catalyzes both the deamination of dCTP to dUTP and the hydrolysis of dUTP to dUMP without releasing the toxic dUTP intermediate. This chain is dCTP deaminase, dUMP-forming, found in Methanosphaerula palustris (strain ATCC BAA-1556 / DSM 19958 / E1-9c).